The following is a 610-amino-acid chain: DNA mismatch repair protein MutL (610 aa).

It belongs to the DNA mismatch repair MutL/HexB family.

Functionally, this protein is involved in the repair of mismatches in DNA. It is required for dam-dependent methyl-directed DNA mismatch repair. May act as a 'molecular matchmaker', a protein that promotes the formation of a stable complex between two or more DNA-binding proteins in an ATP-dependent manner without itself being part of a final effector complex. The protein is DNA mismatch repair protein MutL of Rickettsia conorii (strain ATCC VR-613 / Malish 7).